The chain runs to 370 residues: MRNLDFIDSFIPTEGKYIRVMDFYNSEYPFCIHAPSAPNGDIMTEICSRENNQYFIFFPTDDGRVIIANRHNGSVFTGEATSVVSDIYTGSPLQFFREFKRTMSTYYLAIQNPESATDVRALEPNSHELPSRLYFTNNIENNSNILISNKEQIYLTLPSLPENEQYPKTPVLSGIDDIGPNQSEKSIIGSTLIPCIMVSDFISLGERMKTTPYYYVKHTQYWQSMWSALFPPGSKETKTEKSGITDTSQISMTDGINVSIGADFGLKFGNKTFGIKGGFTYDTKTQITNTSQLLIETTYTREYTNTENFPVRYTGYVLASEFTLHRSDGTQVNTIPWVALNDNYTTIARYPHFASEPLLGNTKIITDDQN.

Positions 1-6 (MRNLDF) are excised as a propeptide. Residues 1 to 155 (MRNLDFIDSF…LISNKEQIYL (155 aa)) are beta-trefoil domain. C31 and C47 are disulfide-bonded. Residues 156 to 370 (TLPSLPENEQ…NTKIITDDQN (215 aa)) form a pore-forming domain region.

Belongs to the toxin_10 family. As to quaternary structure, forms a heterodimer with BinB. Post-translationally, processed by proteases in the mosquito gut, probably at both the N- and C-termini.

It is found in the spore. Its subcellular location is the perispore. Component of a binary toxin active against Culex and some Aedes mosquito larvae. The individual subunits are not toxic. BinAB binds to the gastric caecum and posterior midgut of C.quinquefasciatus larvae; this subunit alone binds the entire larval gut. Binary toxin internalization into host gut cells requires both proteins. Toxic to Aedes atropalpus mosquito larvae; mortality towards both C.quinquefasciatus and A.atropalpus is maximal by 48 hours. A.aegypti is not very susceptible to this toxin. This is Binary larvicide subunit BinA (binA) from Lysinibacillus sphaericus (Bacillus sphaericus).